Here is a 2219-residue protein sequence, read N- to C-terminus: E3 ubiquitin-protein ligase Ubr3 (2219 aa).

Disordered regions lie at residues 1–48 (MDED…DLSS) and 78–134 (AAGA…SALS). The span at 20–29 (VREQTHHPPM) shows a compositional bias: basic and acidic residues. Positions 31–42 (EDQELDNEDGSS) are enriched in acidic residues. Residues 114–134 (GPTTTTSSGTAAESGAASALS) are compositionally biased toward low complexity. The UBR-type zinc-finger motif lies at 222 to 293 (AKCGLVWVPH…AEGFCSDHGI (72 aa)). Disordered regions lie at residues 1348–1367 (SFSL…TMDV) and 1440–1464 (QREK…KARE). Residues 1353–1367 (DGEDQSSDDDSTMDV) show a composition bias toward acidic residues. The RING-type; degenerate zinc finger occupies 1607–1643 (CGHHVHLSCLEAYLKTLYTTQRQPVQDRGEFYCPVCR). 2 disordered regions span residues 1872–1902 (VGSD…QQQQ) and 1935–1954 (SAAA…HGAS). Over residues 1877–1888 (SAAESQQQESAA) the composition is skewed to low complexity.

Belongs to the E3 ubiquitin-protein ligase UBR1-like family. As to quaternary structure, selectively interacts (via UBR-type zinc finger) with the cleaved form of Diap1; this interaction is enhanced by tal. Interacts with tal and Rrp1. Interacts with ovo isoform B (via N-terminus). Interacts with Cad99C (via the cytoplasmic domain). Interacts with ck and Sans. Interacts with cos (via Kinesin motor domain). Post-translationally, in vitro, self-ubiquitination in the presence of E1, E2 and ubiquitin.

Its subcellular location is the cytoplasm. The protein resides in the nucleus. It catalyses the reaction S-ubiquitinyl-[E2 ubiquitin-conjugating enzyme]-L-cysteine + [acceptor protein]-L-lysine = [E2 ubiquitin-conjugating enzyme]-L-cysteine + N(6)-ubiquitinyl-[acceptor protein]-L-lysine.. It functions in the pathway protein modification; protein ubiquitination. Functionally, E3 ubiquitin-protein ligase which is a component of the N-end rule pathway. Recognizes and binds to proteins bearing specific N-terminal residues, leading to their ubiquitination and subsequent degradation. Binds to the E3 ubiquitin-protein ligase Diap1 and enhances its ubiquitination and anti-apoptotic functions. Essential during trichome development for the ubiquitination of the N-terminus of ovo isoform B (svb), converting it from a transcriptional inhibitor to an activator. Positively regulates a hh-signaling pathway which functions in photoreceptor differentiation. Activation of hh up-regulates transcription of Ubr3, which in turn promotes hh signaling by mediating the ubiquitination and degradation of cos. Necessary for auditory transduction: plays a role in Johnston's organ organization by acting in the regulation of zip and ck function in scolopidial apical attachment. Likely to function by acting in a pathway that negatively regulates the ubiquitination of zip, consequently affecting its interaction with ck. May also negatively regulate a component of the SCF (SKP1-CUL1-F-box protein) E3 ubiquitin-protein ligase complex Cul1, which also appears to function in the negative regulation of the zip-ck interaction and scolopidial apical attachment. In Drosophila melanogaster (Fruit fly), this protein is E3 ubiquitin-protein ligase Ubr3.